A 651-amino-acid polypeptide reads, in one-letter code: Coronin-like protein (651 aa).

WD repeat units follow at residues 79-110 (GHTA…GIWD), 138-169 (GHAR…KLWN), 180-210 (KHPD…RVWN), and 226-257 (AKNQ…GIWD). A disordered region spans residues 408-609 (APSFHEAKRP…TSPKSLGLKK (202 aa)). The span at 427–451 (LEEKKEQPKVEKPISESEKEVKQEA) shows a compositional bias: basic and acidic residues. Ser441, Ser454, and Ser456 each carry phosphoserine. A compositionally biased stretch (low complexity) spans 452 to 465 (PKSPSPLKSASSSS). Thr517 and Thr529 each carry phosphothreonine. Basic and acidic residues-rich tracts occupy residues 523 to 540 (ETKK…ELKP) and 547 to 572 (TDRK…EQEK). Phosphoserine occurs at positions 573 and 579. The segment covering 578–590 (SSITAAKTAITAS) has biased composition (low complexity). Positions 618–650 (VLQLEDVVDKLTKANLDKDERLLKLEQKIGELS) form a coiled coil.

Belongs to the WD repeat coronin family. Binds to F-actin.

In Saccharomyces cerevisiae (strain ATCC 204508 / S288c) (Baker's yeast), this protein is Coronin-like protein (CRN1).